Consider the following 164-residue polypeptide: MTDSHATGDMPRVTIYTDGACRGNPGPGGWGAVLRYGQHEKTLKGGEAVTTNNRMELMAAIQALRTLTRACDVALWTDSEYLRKGITEWIHGWVKRGWKTAAKQPVKNAELWRELLAETQRHRIEWHWVKGHSGHEGNELADTLANAATDEIQAAKRQAMAGEQ.

In terms of domain architecture, RNase H type-1 spans 9-150 (DMPRVTIYTD…ADTLANAATD (142 aa)). Positions 18, 56, 78, and 142 each coordinate Mg(2+).

Belongs to the RNase H family. Monomer. It depends on Mg(2+) as a cofactor.

Its subcellular location is the cytoplasm. The enzyme catalyses Endonucleolytic cleavage to 5'-phosphomonoester.. Endonuclease that specifically degrades the RNA of RNA-DNA hybrids. This is Ribonuclease H from Chromohalobacter salexigens (strain ATCC BAA-138 / DSM 3043 / CIP 106854 / NCIMB 13768 / 1H11).